A 315-amino-acid chain; its full sequence is Ribosomal RNA small subunit methyltransferase H (315 aa).

S-adenosyl-L-methionine is bound by residues 61–63 (GGH), aspartate 80, phenylalanine 108, aspartate 124, and glutamine 131. The interval 291 to 315 (PQPEEEEKNPRSRSAKLRFAQRKPL) is disordered. The segment covering 301 to 315 (RSRSAKLRFAQRKPL) has biased composition (basic residues).

It belongs to the methyltransferase superfamily. RsmH family.

Its subcellular location is the cytoplasm. The enzyme catalyses cytidine(1402) in 16S rRNA + S-adenosyl-L-methionine = N(4)-methylcytidine(1402) in 16S rRNA + S-adenosyl-L-homocysteine + H(+). Functionally, specifically methylates the N4 position of cytidine in position 1402 (C1402) of 16S rRNA. This is Ribosomal RNA small subunit methyltransferase H from Crocosphaera subtropica (strain ATCC 51142 / BH68) (Cyanothece sp. (strain ATCC 51142)).